The following is a 639-amino-acid chain: Probable methyltransferase PMT18 (639 aa).

At 1–19 the chain is on the cytoplasmic side; sequence MAKENSSHSLAEAKRKRLT. A helical; Signal-anchor for type II membrane protein membrane pass occupies residues 20-42; that stretch reads WILCVSGLCILSYVLGSWQTNTV. Positions 41–86 are disordered; the sequence is TVPTSSSEAYSRMGCDETSTTTRAQTTQTQTNPSSDDTSSSLSSSE. The Lumenal portion of the chain corresponds to 43 to 639; it reads PTSSSEAYSR…VKSYWTGPSS (597 aa). Residues 58–85 show a composition bias toward low complexity; sequence TSTTTRAQTTQTQTNPSSDDTSSSLSSS. N-linked (GlcNAc...) asparagine glycans are attached at residues asparagine 104 and asparagine 427.

Belongs to the methyltransferase superfamily.

It is found in the endoplasmic reticulum membrane. The polypeptide is Probable methyltransferase PMT18 (Arabidopsis thaliana (Mouse-ear cress)).